The primary structure comprises 222 residues: Large ribosomal subunit protein uL4 (222 aa).

The protein belongs to the universal ribosomal protein uL4 family. Part of the 50S ribosomal subunit.

One of the primary rRNA binding proteins, this protein initially binds near the 5'-end of the 23S rRNA. It is important during the early stages of 50S assembly. It makes multiple contacts with different domains of the 23S rRNA in the assembled 50S subunit and ribosome. In terms of biological role, forms part of the polypeptide exit tunnel. In Methylacidiphilum infernorum (isolate V4) (Methylokorus infernorum (strain V4)), this protein is Large ribosomal subunit protein uL4.